Reading from the N-terminus, the 184-residue chain is Peptidyl-tRNA hydrolase (184 aa).

TRNA is bound at residue Tyr14. His19 serves as the catalytic Proton acceptor. Positions 64, 66, and 112 each coordinate tRNA.

This sequence belongs to the PTH family. Monomer.

It localises to the cytoplasm. It carries out the reaction an N-acyl-L-alpha-aminoacyl-tRNA + H2O = an N-acyl-L-amino acid + a tRNA + H(+). In terms of biological role, hydrolyzes ribosome-free peptidyl-tRNAs (with 1 or more amino acids incorporated), which drop off the ribosome during protein synthesis, or as a result of ribosome stalling. Catalyzes the release of premature peptidyl moieties from peptidyl-tRNA molecules trapped in stalled 50S ribosomal subunits, and thus maintains levels of free tRNAs and 50S ribosomes. In Listeria welshimeri serovar 6b (strain ATCC 35897 / DSM 20650 / CCUG 15529 / CIP 8149 / NCTC 11857 / SLCC 5334 / V8), this protein is Peptidyl-tRNA hydrolase.